Consider the following 214-residue polypeptide: Large ribosomal subunit protein uL3 (214 aa).

Gln153 is subject to N5-methylglutamine.

It belongs to the universal ribosomal protein uL3 family. Part of the 50S ribosomal subunit. Forms a cluster with proteins L14 and L19. In terms of processing, methylated by PrmB.

One of the primary rRNA binding proteins, it binds directly near the 3'-end of the 23S rRNA, where it nucleates assembly of the 50S subunit. The protein is Large ribosomal subunit protein uL3 of Aromatoleum aromaticum (strain DSM 19018 / LMG 30748 / EbN1) (Azoarcus sp. (strain EbN1)).